Consider the following 602-residue polypeptide: Prostaglandin G/H synthase 1 (602 aa).

Positions 1 to 26 (MSRRSLSLQFPLLLLLLLLPPPPVLL) are cleaved as a signal peptide. An EGF-like domain is found at 34 to 72 (PVNPCCYYPCQNQGVCVRFGLDHYQCDCTRTGYSGPNCT). 4 disulfides stabilise this stretch: Cys-38–Cys-49, Cys-39–Cys-161, Cys-43–Cys-59, and Cys-61–Cys-71. 3 N-linked (GlcNAc...) asparagine glycosylation sites follow: Asn-70, Asn-106, and Asn-146. The active-site Proton acceptor is the His-209. The active-site For cyclooxygenase activity is Tyr-387. His-390 lines the heme b pocket. The N-linked (GlcNAc...) asparagine glycan is linked to Asn-412. A disulfide bridge connects residues Cys-571 and Cys-577.

Belongs to the prostaglandin G/H synthase family. As to quaternary structure, homodimer. Heme b serves as cofactor.

The protein resides in the microsome membrane. The protein localises to the endoplasmic reticulum membrane. The enzyme catalyses (5Z,8Z,11Z,14Z)-eicosatetraenoate + AH2 + 2 O2 = prostaglandin H2 + A + H2O. It catalyses the reaction (5Z,8Z,11Z,14Z)-eicosatetraenoate + 2 O2 = prostaglandin G2. It carries out the reaction prostaglandin G2 + AH2 = prostaglandin H2 + A + H2O. The catalysed reaction is (9Z,12Z)-octadecadienoate + AH2 + O2 = (9R)-hydroxy-(10E,12Z)-octadecadienoate + A + H2O. The enzyme catalyses (9Z,12Z)-octadecadienoate + AH2 + O2 = (9S)-hydroxy-(10E,12Z)-octadecadienoate + A + H2O. It catalyses the reaction (9Z,12Z)-octadecadienoate + AH2 + O2 = (13S)-hydroxy-(9Z,11E)-octadecadienoate + A + H2O. It carries out the reaction (9Z,12Z)-octadecadienoate + AH2 + O2 = (13R)-hydroxy-(9Z,11E)-octadecadienoate + A + H2O. The protein operates within lipid metabolism; prostaglandin biosynthesis. With respect to regulation, the cyclooxygenase activity is inhibited by nonsteroidal anti-inflammatory drugs (NSAIDs) including ibuprofen, flurbiprofen, ketoprofen, naproxen, flurbiprofen, anirolac, fenclofenac and diclofenac. Its function is as follows. Dual cyclooxygenase and peroxidase that plays an important role in the biosynthesis pathway of prostanoids, a class of C20 oxylipins mainly derived from arachidonate ((5Z,8Z,11Z,14Z)-eicosatetraenoate, AA, C20:4(n-6)), with a particular role in the inflammatory response. The cyclooxygenase activity oxygenates AA to the hydroperoxy endoperoxide prostaglandin G2 (PGG2), and the peroxidase activity reduces PGG2 to the hydroxy endoperoxide prostaglandin H2 (PGH2), the precursor of all 2-series prostaglandins and thromboxanes. This complex transformation is initiated by abstraction of hydrogen at carbon 13 (with S-stereochemistry), followed by insertion of molecular O2 to form the endoperoxide bridge between carbon 9 and 11 that defines prostaglandins. The insertion of a second molecule of O2 (bis-oxygenase activity) yields a hydroperoxy group in PGG2 that is then reduced to PGH2 by two electrons. Involved in the constitutive production of prostanoids in particular in the stomach and platelets. In gastric epithelial cells, it is a key step in the generation of prostaglandins, such as prostaglandin E2 (PGE2), which plays an important role in cytoprotection. In platelets, it is involved in the generation of thromboxane A2 (TXA2), which promotes platelet activation and aggregation, vasoconstriction and proliferation of vascular smooth muscle cells. Can also use linoleate (LA, (9Z,12Z)-octadecadienoate, C18:2(n-6)) as substrate and produce hydroxyoctadecadienoates (HODEs) in a regio- and stereospecific manner, being (9R)-HODE ((9R)-hydroxy-(10E,12Z)-octadecadienoate) and (13S)-HODE ((13S)-hydroxy-(9Z,11E)-octadecadienoate) its major products. The protein is Prostaglandin G/H synthase 1 of Rattus norvegicus (Rat).